Consider the following 128-residue polypeptide: MRHRKSGRQLNRNSSHRQAMFRNMAGSLVRHEIIKTTLPKAKELRRVVEPLITLAKTDSVANRRLAFARTRDNEIVAKLFNELGPRFASRAGGYTRILKCGFRAGDNAPMAYIELVDRAEPKAEAAAE.

It belongs to the bacterial ribosomal protein bL17 family. In terms of assembly, part of the 50S ribosomal subunit. Contacts protein L32.

This Klebsiella pneumoniae (strain 342) protein is Large ribosomal subunit protein bL17.